The sequence spans 517 residues: Serine hydroxymethyltransferase 1, mitochondrial (517 aa).

A mitochondrion-targeting transit peptide spans 1 to 30 (MAMAMALRRLSSSIDKPIRPLIRSTSCYMS). K286 carries the post-translational modification N6-(pyridoxal phosphate)lysine.

It belongs to the SHMT family. In terms of assembly, homotetramer. Interacts with GLU1. Interacts with UBP16. Pyridoxal 5'-phosphate is required as a cofactor. Post-translationally, ubiquitinated. In terms of tissue distribution, ubiquitous. Mostly expressed in leaves, less abundant in stems, flowers and siliques, and barely detectable in roots.

It localises to the mitochondrion. It is found in the cytoplasm. The catalysed reaction is (6R)-5,10-methylene-5,6,7,8-tetrahydrofolate + glycine + H2O = (6S)-5,6,7,8-tetrahydrofolate + L-serine. The protein operates within one-carbon metabolism; tetrahydrofolate interconversion. Functionally, functions in the photorespiratory pathway in catalyzing the interconversion of serine and glycine. Involved in controlling cell damage caused by abiotic stress, such as high light and salt and the hypersensitive defense response of plants. The sequence is that of Serine hydroxymethyltransferase 1, mitochondrial from Arabidopsis thaliana (Mouse-ear cress).